A 364-amino-acid chain; its full sequence is FNIP repeat-containing protein DDB_G0277323 (364 aa).

FNIP repeat units follow at residues 57–98 (MNIE…DLKY), 155–198 (YDCL…FGWT), 214–244 (LRVL…FGSS), 245–271 (FNQV…NQPI), and 295–340 (FNQP…FINN).

The polypeptide is FNIP repeat-containing protein DDB_G0277323 (Dictyostelium discoideum (Social amoeba)).